A 145-amino-acid chain; its full sequence is Allergen MAG29 (145 aa).

Disordered regions lie at residues 1 to 21 (KDDI…DDKQ) and 103 to 145 (AGGA…EEVD). Positions 104 to 137 (GGAGAGGMPGGFPGGFPGTDGSGGGAAGGDGGKS) are enriched in gly residues.

This sequence belongs to the heat shock protein 70 family.

The sequence is that of Allergen MAG29 (MAG29) from Dermatophagoides farinae (American house dust mite).